Here is a 281-residue protein sequence, read N- to C-terminus: Homoserine kinase (281 aa).

83-93 (PVSSGLGSSAA) contributes to the ATP binding site.

Belongs to the GHMP kinase family. Homoserine kinase subfamily.

Its subcellular location is the cytoplasm. The catalysed reaction is L-homoserine + ATP = O-phospho-L-homoserine + ADP + H(+). It functions in the pathway amino-acid biosynthesis; L-threonine biosynthesis; L-threonine from L-aspartate: step 4/5. Its function is as follows. Catalyzes the ATP-dependent phosphorylation of L-homoserine to L-homoserine phosphate. The sequence is that of Homoserine kinase from Thermotoga petrophila (strain ATCC BAA-488 / DSM 13995 / JCM 10881 / RKU-1).